Here is a 466-residue protein sequence, read N- to C-terminus: Putative ABC transporter ATP-binding protein MG065 (466 aa).

One can recognise an ABC transporter domain in the interval 233-463 (IELKNVYKYI…NLNPKQVEEI (231 aa)). 269 to 276 (GPSGSGKT) contacts ATP.

This sequence belongs to the ABC transporter superfamily.

The protein is Putative ABC transporter ATP-binding protein MG065 of Mycoplasma genitalium (strain ATCC 33530 / DSM 19775 / NCTC 10195 / G37) (Mycoplasmoides genitalium).